Here is a 181-residue protein sequence, read N- to C-terminus: Inner membrane-spanning protein YciB (181 aa).

A run of 5 helical transmembrane segments spans residues 3–23 (LLFD…FGIY), 54–74 (SLAI…PWFI), 81–101 (IYWL…KPLI), 119–139 (LNLA…YVAY), and 149–169 (FKLF…AFYL).

It belongs to the YciB family.

The protein localises to the cell inner membrane. Its function is as follows. Plays a role in cell envelope biogenesis, maintenance of cell envelope integrity and membrane homeostasis. In Legionella pneumophila subsp. pneumophila (strain Philadelphia 1 / ATCC 33152 / DSM 7513), this protein is Inner membrane-spanning protein YciB.